The following is a 38-amino-acid chain: Exendin-1 (38 aa).

The O-linked (HexNAc...) serine; in Exendin-1 and Exendin-1b glycan is linked to S32.

The protein belongs to the glucagon family. O-linked glycan consists of Hex-HexNAc saccharide. Post-translationally, glycosylation may be of interest for the biological stability of exendin-1 and exendin-1b. As to expression, expressed by the venom gland.

It localises to the secreted. O-linked and free exendin-1 and exendin-1b have vasoactive intestinal peptide(VIP)/secretin-like biological activities. They interact with rat and human VIP receptors 1 (VIPR1) and 2 (VIPR2), with the highest affinity for the human VIPR2. They induce hypotension that is mediated by relaxation of cardiac smooth muscle. In Heloderma horridum horridum (Mexican beaded lizard), this protein is Exendin-1.